Here is a 105-residue protein sequence, read N- to C-terminus: Small ribosomal subunit protein eS24 (105 aa).

The disordered stretch occupies residues 86-105; that stretch reads LERNKIEADEEADEEAAEEA. Over residues 93-105 the composition is skewed to acidic residues; it reads ADEEADEEAAEEA.

This sequence belongs to the eukaryotic ribosomal protein eS24 family.

The sequence is that of Small ribosomal subunit protein eS24 from Natronomonas pharaonis (strain ATCC 35678 / DSM 2160 / CIP 103997 / JCM 8858 / NBRC 14720 / NCIMB 2260 / Gabara) (Halobacterium pharaonis).